Here is a 366-residue protein sequence, read N- to C-terminus: Inhibin alpha chain (366 aa).

A signal peptide spans 1 to 20 (MVSQRSLLLLLLLTLRDVDS). The propeptide occupies 21 to 63 (CQGPELVRELVLAKVKALFLDALGPPAMDGEGGDPGIRRLPRR). The propeptide at 64 to 233 (HAVGGFMHRT…APSAGERARR (170 aa)) is inhibin alpha N-terminal region. 2 N-linked (GlcNAc...) asparagine glycosylation sites follow: Asn-147 and Asn-269. 3 disulfide bridges follow: Cys-263/Cys-328, Cys-292/Cys-363, and Cys-296/Cys-365.

It belongs to the TGF-beta family. In terms of assembly, dimeric, linked by one or more disulfide bonds. Activin B is a dimer of alpha and beta-B. Inhibin A is a dimer of alpha and beta-A. Inhibin B is a dimer of alpha and beta-B. Interacts with TGFBR3L; this interaction regulates female fertility. In terms of processing, proteolytic processing yields a number of bioactive forms, consisting either solely of the mature alpha chain, of the most N-terminal propeptide linked through a disulfide bond to the mature alpha chain, or of the entire proprotein.

It localises to the secreted. Inhibins and activins inhibit and activate, respectively, the secretion of follitropin by the pituitary gland. Inhibins/activins are involved in regulating a number of diverse functions such as hypothalamic and pituitary hormone secretion, gonadal hormone secretion, germ cell development and maturation, erythroid differentiation, insulin secretion, nerve cell survival, embryonic axial development or bone growth, depending on their subunit composition. Inhibins appear to oppose the functions of activins. Its function is as follows. Inhibin A is a dimer of alpha/INHA and beta-A/INHBA that functions as a feedback regulator in the hypothalamic-pituitary-gonadal (HPG) axis. Inhibits the secretion of FSH from the anterior pituitary gland by acting on pituitary gonadotrope cells. Antagonizes activin A by binding to the proteoglycan, betaglycan, and forming a stable complex with and, thereby, sequestering type II activin receptors while excluding type I receptor. Functionally, inhibin B is a dimer of alpha and beta-B that plays a crucial role in the regulation of the reproductive system by inhibiting the secretion of follicle-stimulating hormone (FSH) from the anterior pituitary gland. Thereby, maintains reproductive homeostasis in both males and females. Acts as a more potent suppressor of FSH release than inhibin A. Functions as competitive receptor antagonist binding activin type II receptors with high affinity in the presence of the TGF-beta type III coreceptor/TGFBR3L. In Mus musculus (Mouse), this protein is Inhibin alpha chain (Inha).